Reading from the N-terminus, the 185-residue chain is Putative manganese efflux pump MntP (185 aa).

6 helical membrane passes run 4 to 24 (LTSS…ALAI), 36 to 56 (ALVI…AGWI), 65 to 85 (ISSY…IKMI), 105 to 125 (VILL…SFGV), 130 to 150 (VLMP…AGVF), and 165 to 185 (IFGG…ILPL).

This sequence belongs to the MntP (TC 9.B.29) family.

It is found in the cell membrane. Its function is as follows. Probably functions as a manganese efflux pump. The sequence is that of Putative manganese efflux pump MntP from Methanoregula boonei (strain DSM 21154 / JCM 14090 / 6A8).